Here is a 292-residue protein sequence, read N- to C-terminus: Nitrogenase iron protein (292 aa).

8 to 15 (GKGGIGKS) contributes to the ATP binding site. Position 96 (C96) interacts with [4Fe-4S] cluster. Position 99 is an ADP-ribosylarginine; by dinitrogenase reductase ADP-ribosyltransferase (R99). Residue C130 participates in [4Fe-4S] cluster binding.

It belongs to the NifH/BchL/ChlL family. Homodimer. [4Fe-4S] cluster is required as a cofactor. The reversible ADP-ribosylation of Arg-99 inactivates the nitrogenase reductase and regulates nitrogenase activity.

It carries out the reaction N2 + 8 reduced [2Fe-2S]-[ferredoxin] + 16 ATP + 16 H2O = H2 + 8 oxidized [2Fe-2S]-[ferredoxin] + 2 NH4(+) + 16 ADP + 16 phosphate + 6 H(+). The key enzymatic reactions in nitrogen fixation are catalyzed by the nitrogenase complex, which has 2 components: the iron protein and the molybdenum-iron protein. The polypeptide is Nitrogenase iron protein (Synechococcus sp. (strain JA-3-3Ab) (Cyanobacteria bacterium Yellowstone A-Prime)).